A 76-amino-acid chain; its full sequence is Sec-independent protein translocase protein TatA (76 aa).

A helical transmembrane segment spans residues 1–21; it reads MLGGLTGWHLLIILAVILLLF. Over residues 44-57 the composition is skewed to basic and acidic residues; it reads VNEMKKDGDKDKGE. The disordered stretch occupies residues 44–76; the sequence is VNEMKKDGDKDKGEGGSTAPATDTGASSEQNSK. A compositionally biased stretch (polar residues) spans 62 to 76; it reads APATDTGASSEQNSK.

It belongs to the TatA/E family. The Tat system comprises two distinct complexes: a TatABC complex, containing multiple copies of TatA, TatB and TatC subunits, and a separate TatA complex, containing only TatA subunits. Substrates initially bind to the TatABC complex, which probably triggers association of the separate TatA complex to form the active translocon.

It localises to the cell membrane. In terms of biological role, part of the twin-arginine translocation (Tat) system that transports large folded proteins containing a characteristic twin-arginine motif in their signal peptide across membranes. TatA could form the protein-conducting channel of the Tat system. This Leifsonia xyli subsp. xyli (strain CTCB07) protein is Sec-independent protein translocase protein TatA.